Reading from the N-terminus, the 323-residue chain is Octaprenyl diphosphate synthase (323 aa).

Isopentenyl diphosphate contacts are provided by lysine 45, arginine 48, and histidine 77. Mg(2+) contacts are provided by aspartate 84 and aspartate 88. Arginine 93 lines the an all-trans-polyprenyl diphosphate pocket. Residue arginine 94 coordinates isopentenyl diphosphate. An all-trans-polyprenyl diphosphate is bound by residues lysine 170, threonine 171, and glutamine 208.

This sequence belongs to the FPP/GGPP synthase family. It depends on Mg(2+) as a cofactor.

It catalyses the reaction 5 isopentenyl diphosphate + (2E,6E)-farnesyl diphosphate = all-trans-octaprenyl diphosphate + 5 diphosphate. Functionally, supplies octaprenyl diphosphate, the precursor for the side chain of the isoprenoid quinones ubiquinone and menaquinone. The protein is Octaprenyl diphosphate synthase (ispB) of Escherichia coli (strain K12).